A 444-amino-acid polypeptide reads, in one-letter code: MAPDPVAAETAAQGPTPRYFTWDEVAQRSGCEERWLVIDRKVYNISEFTRRHPGGSRVISHYAGQDATDPFVAFHINKGLVKKYMNSLLIGELSPEQPSFEPTKNKELTDEFRELRATVERMGLMKANHVFFLLYLLHILLLDGAAWLTLWVFGTSFLPFLLCAVLLSAVQAQAGWLQHDFGHLSVFSTSKWNHLLHHFVIGHLKGAPASWWNHMHFQHHAKPNCFRKDPDINMHPFFFALGKILSVELGKQKKKYMPYNHQHKYFFLIGPPALLPLYFQWYIFYFVIQRKKWVDLAWMITFYVRFFLTYVPLLGLKAFLGLFFIVRFLESNWFVWVTQMNHIPMHIDHDRNMDWVSTQLQATCNVHKSAFNDWFSGHLNFQIEHHLFPTMPRHNYHKVAPLVQSLCAKHGIEYQSKPLLSAFADIIHSLKESGQLWLDAYLHQ.

Met1 is modified (N-acetylmethionine). Residues Met1–Arg121 are Cytoplasmic-facing. Residues Pro17–Ser94 form the Cytochrome b5 heme-binding domain. The helical transmembrane segment at Met122–Leu142 threads the bilayer. The Lumenal segment spans residues Asp143 to Ala145. The chain crosses the membrane as a helical span at residues Ala146–Val170. Topologically, residues Gln171 to Phe267 are cytoplasmic. The Histidine box-1 motif lies at His179–His183. A Histidine box-2 motif is present at residues His216–His220. The helical transmembrane segment at Leu268–Ile288 threads the bilayer. Topologically, residues Gln289–Arg305 are lumenal. The chain crosses the membrane as a helical span at residues Phe306–Val326. Residues Arg327–Gln444 are Cytoplasmic-facing. Positions Gln382–His386 match the Histidine box-3 motif.

It belongs to the fatty acid desaturase type 1 family. In terms of tissue distribution, widely expressed, with highest levels in liver, brain, adrenal gland and heart. Highly expressed in fetal liver and brain.

The protein localises to the endoplasmic reticulum membrane. It localises to the mitochondrion. The catalysed reaction is (8Z,11Z,14Z)-eicosatrienoyl-CoA + 2 Fe(II)-[cytochrome b5] + O2 + 2 H(+) = (5Z,8Z,11Z,14Z)-eicosatetraenoyl-CoA + 2 Fe(III)-[cytochrome b5] + 2 H2O. The enzyme catalyses (8Z,11Z,14Z,17Z)-eicosatetraenoyl-CoA + 2 Fe(II)-[cytochrome b5] + O2 + 2 H(+) = (5Z,8Z,11Z,14Z,17Z)-eicosapentaenoyl-CoA + 2 Fe(III)-[cytochrome b5] + 2 H2O. It carries out the reaction (11E)-octadecenoyl-CoA + 2 Fe(II)-[cytochrome b5] + O2 + 2 H(+) = (5Z,11E)-octadecadienoyl-CoA + 2 Fe(III)-[cytochrome b5] + 2 H2O. It functions in the pathway lipid metabolism; polyunsaturated fatty acid biosynthesis. Acts as a front-end fatty acyl-coenzyme A (CoA) desaturase that introduces a cis double bond at carbon 5 located between a preexisting double bond and the carboxyl end of the fatty acyl chain. Involved in biosynthesis of highly unsaturated fatty acids (HUFA) from the essential polyunsaturated fatty acids (PUFA) linoleic acid (LA) (18:2n-6) and alpha-linolenic acid (ALA) (18:3n-3) precursors. Specifically, desaturates dihomo-gamma-linoleoate (DGLA) (20:3n-6) and eicosatetraenoate (ETA) (20:4n-3) to generate arachidonate (AA) (20:4n-6) and eicosapentaenoate (EPA) (20:5n-3), respectively. As a rate limiting enzyme for DGLA (20:3n-6) and AA (20:4n-6)-derived eicosanoid biosynthesis, controls the metabolism of inflammatory lipids like prostaglandin E2, critical for efficient acute inflammatory response and maintenance of epithelium homeostasis. Contributes to membrane phospholipid biosynthesis by providing AA (20:4n-6) as a major acyl chain esterified into phospholipids. In particular, regulates phosphatidylinositol-4,5-bisphosphate levels, modulating inflammatory cytokine production in T-cells. Also desaturates (11E)-octadecenoate (trans-vaccenoate)(18:1n-9), a metabolite in the biohydrogenation pathway of LA (18:2n-6). Functionally, does not exhibit any catalytic activity toward 20:3n-6, but it may enhance FADS2 activity. The chain is Acyl-CoA (8-3)-desaturase from Homo sapiens (Human).